Here is a 188-residue protein sequence, read N- to C-terminus: MADEQTLDTQNLDANQAPEASGDDLAARVQVLEEQLAGAQDQALRVAADLQNVRRRAEQDVEKAHKFALEKFAGDLLPVIDSLERGLELSNPDDESIRPMREGIELTLKMFHDTLKRYQLEAIDPHGEPFNAEQHQAMAMQESADVEPNSVLKVFQKGYQLNGRLLRPAMVVVSKAPAPVSPSIDEKA.

The interval 1 to 22 (MADEQTLDTQNLDANQAPEASG) is disordered.

It belongs to the GrpE family. In terms of assembly, homodimer.

The protein resides in the cytoplasm. Participates actively in the response to hyperosmotic and heat shock by preventing the aggregation of stress-denatured proteins, in association with DnaK and GrpE. It is the nucleotide exchange factor for DnaK and may function as a thermosensor. Unfolded proteins bind initially to DnaJ; upon interaction with the DnaJ-bound protein, DnaK hydrolyzes its bound ATP, resulting in the formation of a stable complex. GrpE releases ADP from DnaK; ATP binding to DnaK triggers the release of the substrate protein, thus completing the reaction cycle. Several rounds of ATP-dependent interactions between DnaJ, DnaK and GrpE are required for fully efficient folding. The protein is Protein GrpE of Pseudomonas fluorescens (strain ATCC BAA-477 / NRRL B-23932 / Pf-5).